The chain runs to 333 residues: MLISFCIPTYNRKEYLEELLNSINNQEKFNLDIEICISDNASTDGTEEMIDVWRNNYNFPIIYRRNSVNLGPDRNFLASVSLANGDYCWIFGSDDALAKDSLAILQTYLDSQADIYLCDRKETGCDLVEIRNPHRSWLRTDDELYVFNNNLDREIYLSRCLSIGGVFSYLSSLIVKKERWDAIDFDASYIGTSYPHVFIMMSVFNTPGCLLHYISKPLVICRGDNDSFEKKGKARRILIDFIAYLKLANDFYSKNISLKRAFENVLLKERPWLYTTLAMACYGNSDEKRDLSEFYAKLGCNKNMINTVLRFGKLAYAVKNITVLKNFTKRIIK.

Belongs to the glycosyltransferase 2 family.

It carries out the reaction CDP-alpha-D-abequose + alpha-D-Man-(1-&gt;4)-alpha-L-Rha-(1-&gt;3)-alpha-D-Gal-di-trans,octa-cis-undecaprenyl diphosphate = alpha-D-Abe-(1-&gt;3)-alpha-D-Man-(1-&gt;4)-alpha-L-Rha-(1-&gt;3)-alpha-D-Gal-di-trans,octa-cis-undecaprenyl diphosphate + CDP + H(+). The protein operates within bacterial outer membrane biogenesis; LPS O-antigen biosynthesis. Catalyzes the transfer of CDP-abequose on D-mannosyl-L-rhamnosyl-D-galactose-1-diphospholipid to yield D-abequosyl-D-mannosyl-rhamnosyl-D-galactose-1-diphospholipid. The sequence is that of Abequosyltransferase RfbV (rfbV) from Salmonella typhimurium (strain LT2 / SGSC1412 / ATCC 700720).